We begin with the raw amino-acid sequence, 142 residues long: Transcriptional regulator MraZ (142 aa).

SpoVT-AbrB domains follow at residues 5–51 and 77–120; these read ASAL…PRPE and AMDV…DAQT.

The protein belongs to the MraZ family. As to quaternary structure, forms oligomers.

Its subcellular location is the cytoplasm. It localises to the nucleoid. The protein is Transcriptional regulator MraZ of Burkholderia mallei (strain NCTC 10247).